Reading from the N-terminus, the 487-residue chain is Phosphatidylserine synthase 2 (487 aa).

Residues Met-1–Gly-10 show a composition bias toward basic and acidic residues. The tract at residues Met-1–Glu-50 is disordered. The Cytoplasmic segment spans residues Met-1–Arg-62. Phosphoserine is present on residues Ser-16 and Ser-24. The helical transmembrane segment at Ala-63 to Glu-83 threads the bilayer. Residues Glu-84–Gly-96 lie on the Lumenal side of the membrane. A helical transmembrane segment spans residues Ile-97–Phe-117. Residues Ser-118–Arg-126 lie on the Cytoplasmic side of the membrane. A helical transmembrane segment spans residues Phe-127–Val-147. Topologically, residues Gln-148–Arg-313 are lumenal. A glycan (N-linked (GlcNAc...) asparagine) is linked at Asn-181. A helical transmembrane segment spans residues Trp-314–Leu-334. A topological domain (cytoplasmic) is located at residue Lys-335. The helical transmembrane segment at Phe-336–Asn-356 threads the bilayer. The Lumenal portion of the chain corresponds to Val-357–Lys-376. A helical transmembrane segment spans residues Lys-377–Val-397. Over Lys-398–Thr-403 the chain is Cytoplasmic. The helical transmembrane segment at Leu-404–Leu-424 threads the bilayer. Over Thr-425–Asn-487 the chain is Lumenal. The interval Lys-451–Asn-487 is disordered. Position 485 is a phosphothreonine (Thr-485).

The protein belongs to the phosphatidyl serine synthase family.

Its subcellular location is the endoplasmic reticulum membrane. It catalyses the reaction a 1,2-diacyl-sn-glycero-3-phosphoethanolamine + L-serine = a 1,2-diacyl-sn-glycero-3-phospho-L-serine + ethanolamine. It carries out the reaction 1-hexadecanoyl-2-(9Z-octadecenoyl)-sn-glycero-3-phosphoethanolamine + L-serine = 1-hexadecanoyl-2-(9Z-octadecenoyl)-sn-glycero-3-phospho-L-serine + ethanolamine. The catalysed reaction is 1-hexadecanoyl-2-(4Z,7Z,10Z,13Z,16Z,19Z-docosahexaenoyl)-sn-glycero-3-phosphoethanolamine + L-serine = 1-hexadecanoyl-2-(4Z,7Z,10Z,13Z,16Z,19Z-docosahexaenoyl)-sn-glycero-3-phosphoserine + ethanolamine. The enzyme catalyses 1-octadecanoyl-2-(5Z,8Z,11Z,14Z)-eicosatetraenoyl-sn-glycero-3-phosphoethanolamine + L-serine = 1-octadecanoyl-2-(5Z,8Z,11Z,14Z)-eicosatetraenoyl-sn-glycero-3-phosphoserine + ethanolamine. It catalyses the reaction 1-octadecanoyl-2-(4Z,7Z,10Z,13Z,16Z,19Z-docosahexaenoyl)-sn-glycero-3-phosphoethanolamine + L-serine = 1-octadecanoyl-2-(4Z,7Z,10Z,13Z,16Z,19Z-docosahexaenoyl)-sn-glycero-3-phosphoserine + ethanolamine. It carries out the reaction 1-(1Z-octadecenyl)-2-(4Z,7Z,10Z,13Z,16Z,19Z-docosahexaenoyl)-sn-glycero-3-phosphoethanolamine + L-serine = 1-(1Z-octadecenyl)-2-(4Z,7Z,10Z,13Z,16Z,19Z-docosahexaenoyl)-sn-glycero-3-phospho-L-serine + ethanolamine. The catalysed reaction is 1-octadecanoyl-2-(9Z-octadecenoyl)-sn-glycero-3-phosphoethanolamine + L-serine = 1-octadecanoyl-2-(9Z-octadecenoyl)-sn-glycero-3-phospho-L-serine + ethanolamine. The enzyme catalyses 1-(1Z-octadecenyl)-2-(9Z-octadecenoyl)-sn-glycero-3-phosphoethanolamine + L-serine = 1-(1Z-octadecenyl)-2-(9Z-octadecenoyl)-sn-glycero-3-phospho-L-serine + ethanolamine. It catalyses the reaction 1-(1Z-octadecenyl)-2-(5Z,8Z,11Z,14Z- eicosatetraenoyl)-sn-glycero-3-phosphoethanolamine + L-serine = 1-(1Z-octadecenyl)-2-(5Z,8Z,11Z,14Z-eicosatetraenoyl)-sn-glycero-3-phospho-L-serine + ethanolamine. It participates in phospholipid metabolism; phosphatidylserine biosynthesis. With respect to regulation, requires calcium ions. Inhibited by exogenous phosphatidylserine. Catalyzes a base-exchange reaction in which the polar head group of phosphatidylethanolamine (PE) or phosphatidylcholine (PC) is replaced by L-serine. Catalyzes the conversion of phosphatatidylethanolamine and does not act on phosphatidylcholine. Can utilize both phosphatidylethanolamine (PE) plasmalogen and diacyl PE as substrate and the latter is six times better utilized, indicating the importance of an ester linkage at the sn-1 position. Although it shows no sn-1 fatty acyl preference, exhibits significant preference towards docosahexaenoic acid (22:6n-3) compared with 18:1 or 20:4 at the sn-2 position. This chain is Phosphatidylserine synthase 2 (PTDSS2), found in Homo sapiens (Human).